A 406-amino-acid chain; its full sequence is Inner kinetochore subunit OKP1 (406 aa).

Disordered regions lie at residues 1–37 (MAADRDNFLQNIENDSINNGQAMDLSPNRSSSESDSS) and 59–122 (TQSK…TSGE). Residues 8-21 (FLQNIENDSINNGQ) show a composition bias toward polar residues. A compositionally biased stretch (low complexity) spans 26 to 37 (SPNRSSSESDSS). Acidic residues predominate over residues 69-78 (NSDDAEEGEI). Ser70 carries the post-translational modification Phosphoserine. 2 stretches are compositionally biased toward basic and acidic residues: residues 79-89 (EERTNKEEGQY) and 97-106 (LRFEVGKEST). Polar residues predominate over residues 107-122 (GKLQSHLSDGSATSGE). Residues 239–285 (SKRQFIQNRYSQELQNNERLEAILSREQNLLEETRKLCMNLKTNNKK) are a coiled coil. A CTF19-MCM21 binding motif region spans residues 317-340 (MHPDGPVTFRNDSHELNLMLNDPI). The interval 353 to 400 (VLSLLPSLKEYTKKSKELKETMGQMISDSHEEEIKEVFVPHHESHQDK) is interaction with NKP1-NKP2. Positions 379–406 (SDSHEEEIKEVFVPHHESHQDKTEEDIH) are disordered. The span at 380–406 (DSHEEEIKEVFVPHHESHQDKTEEDIH) shows a compositional bias: basic and acidic residues.

This sequence belongs to the CENP-Q/OKP1 family. As to quaternary structure, component of the heterotetrameric kinetochore subcomplex COMA, which consists of AME1, CTF19, MCM21 and OKP1. The COMA subcomplex is part of a larger constitutive centromere-associated network (CCAN) (also known as central kinetochore CTF19 complex in yeast), which is composed of at least AME1, CHL4, CNN1, CTF3, CTF19, IML3, MCM16, MCM21, MCM22, MHF1, MHF2, MIF2, NKP1, NKP2, OKP1 and WIP1. COMA binds the centromeric nucleosome-binding protein MIF2, and to the outer kinetochore MIND subcomplex. OKP1 interacts directly with AME1, with an NKP1-NKP2 dimer, and with CTF19-MCM21.

It is found in the nucleus. Its subcellular location is the chromosome. The protein resides in the centromere. It localises to the kinetochore. Its function is as follows. Component of the kinetochore, a multiprotein complex that assembles on centromeric DNA and attaches chromosomes to spindle microtubules, mediating chromosome segregation and sister chromatid segregation during meiosis and mitosis. Component of the inner kinetochore COMA complex, which connects centromere-associated proteins and the outer kinetochore. COMA interacts with other inner kinetochore proteins to form the inner kinetochore constitutive centromere-associated network (CCAN), which serves as a structural platform for outer kinetochore assembly. The sequence is that of Inner kinetochore subunit OKP1 from Saccharomyces cerevisiae (strain ATCC 204508 / S288c) (Baker's yeast).